Reading from the N-terminus, the 245-residue chain is Lytic switch protein BZLF1 (245 aa).

The transactivation stretch occupies residues 1-167 (MMDPNSTSED…RTRKPQQPES (167 aa)). T14 and T159 each carry phosphothreonine; by host. Positions 157–194 (RRTRKPQQPESLEECDSELEIKRYKNRVASRKCRAKFK) match the Bipartite nuclear localization signal motif. 3 positions are modified to phosphoserine; by host: S167, S173, and S186. Residues 170-228 (ECDSELEIKRYKNRVASRKCRAKFKQLLQHYREVAAAKSSENDRLRLLLKQMCPSLDVD) form the bZIP domain. Positions 178–195 (KRYKNRVASRKCRAKFKQ) are basic motif. Residues 196 to 228 (LLQHYREVAAAKSSENDRLRLLLKQMCPSLDVD) are leucine-zipper. Residues 229–245 (SIIPRTPDVLHEDLLNF) form an accessory activation domain region.

It belongs to the bZIP family. As to quaternary structure, homodimer. Interacts (via b-ZIP domain) with the DNA polymerase processivity factor BMRF1 (via N-terminus); this interaction may inhibit BZLF1-induced transcription of the BMRF1 promoter. Interacts with human UBN1, CRTC2 and RACK1. Interacts (via N-terminus) with human PAX5 (via N-terminus); this interaction inhibits BZLF1-mediated lytic viral reactivation. Interacts (via leucine-zipper domain) with host CEBPA; this interaction induces G1 host cell cycle arrest. Interacts (via C-terminus) with host TP53BP1 (via C-terminus); this interaction is involved in the activation of the viral lytic cycle. Interacts with host chromatin-remodeling ATPase INO80; this interaction participates to the activation of early lytic viral genes by BZLF1. Interacts with host regulator of chromatin SMARCA5/hSNF2H; this interaction participates to the activation of early lytic viral genes by BZLF1. Interacts with host PLSCR1/Phospholipid scramblase 1; this interaction negatively regulates the transcriptional regulatory activity of BZLF1 by preventing the formation of the BZLF1-CBP complex.

Its subcellular location is the host nucleus. Transcription factor that acts as a molecular switch to induce the transition from the latent to the lytic or productive phase of the virus cycle. Mediates the switch from the latent to the lytic cycle of infection in cells containing a highly methylated viral genome. Probably binds to silenced chromatin and recruits host chromatin-remodeling enzymes. Regulates this switch by binding to 2 types of ZEBRA response elements (ZREs): the CpG-free AP-1 like elements (latency) and the methylated CpG-containing elements (lytic replication). Activates preferentially the methylated forms of the viral lytic R (BRLF1) and Na (BRRF1) gene promoters, the latters being the first genes activated during Z-mediated reactivation in latently infected cells. BZLF1 and BRLF1 act together to trigger lytic replication. Also binds the lytic origin of replication, oriLyt. Induces G1 cell cycle arrest by stabilizing the host CCAAT/enhancer binding protein CEBPA. This function is important because the lytic cycle preferentially takes place in host cells arrested in G1. The sequence is that of Lytic switch protein BZLF1 from Epstein-Barr virus (strain B95-8) (HHV-4).